The sequence spans 360 residues: Photosystem II protein D1 (360 aa).

Transmembrane regions (helical) follow at residues 29 to 46 (YIGW…TATT), 118 to 133 (HFLL…EWEL), and 142 to 156 (WICV…AATA). H118 contributes to the chlorophyll a binding site. Y126 contacts pheophytin a. D170 and E189 together coordinate [CaMn4O5] cluster. The chain crosses the membrane as a helical span at residues 197–218 (FHMAGVAGVFGGALFSAMHGSL). H198 is a chlorophyll a binding site. Residues H215 and 264 to 265 (SF) each bind a quinone. Position 215 (H215) interacts with Fe cation. Residue H272 participates in Fe cation binding. The helical transmembrane segment at 274–288 (FLGLWPVVGIWLTSI) threads the bilayer. [CaMn4O5] cluster contacts are provided by H332, E333, D342, and A344. Positions 345–360 (DNSLLPVASSSPSINS) are excised as a propeptide.

This sequence belongs to the reaction center PufL/M/PsbA/D family. In terms of assembly, PSII is composed of 1 copy each of membrane proteins PsbA, PsbB, PsbC, PsbD, PsbE, PsbF, PsbH, PsbI, PsbJ, PsbK, PsbL, PsbM, PsbT, PsbY, PsbZ, Psb30/Ycf12, at least 3 peripheral proteins of the oxygen-evolving complex and a large number of cofactors. It forms dimeric complexes. The D1/D2 heterodimer binds P680, chlorophylls that are the primary electron donor of PSII, and subsequent electron acceptors. It shares a non-heme iron and each subunit binds pheophytin, quinone, additional chlorophylls, carotenoids and lipids. D1 provides most of the ligands for the Mn4-Ca-O5 cluster of the oxygen-evolving complex (OEC). There is also a Cl(-1) ion associated with D1 and D2, which is required for oxygen evolution. The PSII complex binds additional chlorophylls, carotenoids and specific lipids. is required as a cofactor. Tyr-161 forms a radical intermediate that is referred to as redox-active TyrZ, YZ or Y-Z.

The protein localises to the plastid. It localises to the chloroplast thylakoid membrane. It catalyses the reaction 2 a plastoquinone + 4 hnu + 2 H2O = 2 a plastoquinol + O2. Functionally, photosystem II (PSII) is a light-driven water:plastoquinone oxidoreductase that uses light energy to abstract electrons from H(2)O, generating O(2) and a proton gradient subsequently used for ATP formation. It consists of a core antenna complex that captures photons, and an electron transfer chain that converts photonic excitation into a charge separation. The D1/D2 (PsbA/PsbD) reaction center heterodimer binds P680, the primary electron donor of PSII as well as several subsequent electron acceptors. This is Photosystem II protein D1 from Cyanidium caldarium (Red alga).